Reading from the N-terminus, the 522-residue chain is Exo-alpha-(1-&gt;6)-L-arabinofuranosidase (522 aa).

The alpha-L-arabinofuranose site is built by E39, N84, and N185. The active-site Proton donor/acceptor is E186. Alpha-L-arabinofuranose contacts are provided by Y257, E310, and Q370. E310 serves as the catalytic Nucleophile.

It belongs to the glycosyl hydrolase 51 family. In terms of assembly, homohexamer; trimer of dimers.

The catalysed reaction is Hydrolysis of terminal non-reducing alpha-L-arabinofuranoside residues in alpha-L-arabinosides.. It catalyses the reaction (20S)-ginsenoside Rc + H2O = L-arabinofuranose + (20S)-ginsenoside Rd. With respect to regulation, completely inhibited by Cu(2+) and partially inhibited by Co(2+) and Ba(2+). Its function is as follows. Catalyzes the hydrolysis of p-nitrophenyl-alpha-L-arabinofuranoside (pNP-alphaL-Af) and the hydrolysis of the terminal alpha-L-arabinofuranoside at the C20 position of ginsenoside Rc to produce ginsenoside Rd. Cannot hydrolyze p-nitrophenyl-alpha-L-arabinopyranoside (pNP-alphaL-Ap) and ginsenoside Rb2. In Bifidobacterium longum, this protein is Exo-alpha-(1-&gt;6)-L-arabinofuranosidase.